The primary structure comprises 116 residues: Histone H2B (116 aa).

The span at 1–11 (TSGKAAKKAGK) shows a compositional bias: basic residues. The segment at 1 to 25 (TSGKAAKKAGKAQKSITKGDKKKRK) is disordered. K4, K11, and K14 each carry N6-acetyllysine. An O-linked (GlcNAc) serine glycan is attached at S103. K111 is covalently cross-linked (Glycyl lysine isopeptide (Lys-Gly) (interchain with G-Cter in ubiquitin)).

In terms of assembly, the nucleosome is a histone octamer containing two molecules each of H2A, H2B, H3 and H4 assembled in one H3-H4 heterotetramer and two H2A-H2B heterodimers. The octamer wraps approximately 147 bp of DNA. In terms of processing, monoubiquitination gives a specific tag for epigenetic transcriptional activation and is also prerequisite for histone H3 'Lys-4' and 'Lys-79' methylation. Post-translationally, glcNAcylation at Ser-103 promotes monoubiquitination of Lys-111. It fluctuates in response to extracellular glucose, and associates with transcribed genes.

The protein resides in the nucleus. It localises to the chromosome. Its function is as follows. Core component of nucleosome. Nucleosomes wrap and compact DNA into chromatin, limiting DNA accessibility to the cellular machineries which require DNA as a template. Histones thereby play a central role in transcription regulation, DNA repair, DNA replication and chromosomal stability. DNA accessibility is regulated via a complex set of post-translational modifications of histones, also called histone code, and nucleosome remodeling. Functionally, a mixture of histones H2B and H4 has antimicrobial activity against the Gram-positive bacterium M.luteus. This chain is Histone H2B, found in Penaeus vannamei (Whiteleg shrimp).